The sequence spans 615 residues: Cilia- and flagella-associated protein 52 (615 aa).

WD repeat units follow at residues 54–98, 101–142, 145–184, 232–275, 320–359, 362–401, 405–444, 449–488, 490–529, 533–572, and 575–614; these read GHSD…LIHR, LHKV…AICG, CNTN…NKLR, GPAK…AGTK, AHND…ELLR, VPNL…IIFT, AHQK…QTLE, DHKG…RRTS, FANT…AIRI, SDLD…CYFV, and AHSG…TLAD.

This sequence belongs to the CFAP52 family.

Its subcellular location is the cytoplasm. It is found in the cell projection. The protein resides in the cilium. The protein localises to the flagellum. In terms of biological role, may play a role in cell growth and/or survival. The sequence is that of Cilia- and flagella-associated protein 52 from Chlamydomonas reinhardtii (Chlamydomonas smithii).